Consider the following 85-residue polypeptide: UPF0291 protein SEQ_0545 (85 aa).

The tract at residues 62–85 (TPEKLRQVQREKGLHGRSLDDPES) is disordered.

Belongs to the UPF0291 family.

The protein localises to the cytoplasm. The chain is UPF0291 protein SEQ_0545 from Streptococcus equi subsp. equi (strain 4047).